Consider the following 540-residue polypeptide: Chaperonin GroEL 1 (540 aa).

ATP contacts are provided by residues 29–32 (TIGP), 86–90 (DGTTT), glycine 415, 479–481 (NAA), and aspartate 495.

It belongs to the chaperonin (HSP60) family. As to quaternary structure, forms a cylinder of 14 subunits composed of two heptameric rings stacked back-to-back. Interacts with the co-chaperonin GroES.

The protein localises to the cytoplasm. It carries out the reaction ATP + H2O + a folded polypeptide = ADP + phosphate + an unfolded polypeptide.. In terms of biological role, together with its co-chaperonin GroES, plays an essential role in assisting protein folding. The GroEL-GroES system forms a nano-cage that allows encapsulation of the non-native substrate proteins and provides a physical environment optimized to promote and accelerate protein folding. This chain is Chaperonin GroEL 1, found in Streptomyces albus G.